We begin with the raw amino-acid sequence, 186 residues long: Peptidyl-tRNA hydrolase (186 aa).

A tRNA-binding site is contributed by Tyr-14. The active-site Proton acceptor is the His-19. Residues Phe-64, Asn-66, and Asn-112 each coordinate tRNA.

Belongs to the PTH family. Monomer.

It localises to the cytoplasm. It carries out the reaction an N-acyl-L-alpha-aminoacyl-tRNA + H2O = an N-acyl-L-amino acid + a tRNA + H(+). Its function is as follows. Hydrolyzes ribosome-free peptidyl-tRNAs (with 1 or more amino acids incorporated), which drop off the ribosome during protein synthesis, or as a result of ribosome stalling. Catalyzes the release of premature peptidyl moieties from peptidyl-tRNA molecules trapped in stalled 50S ribosomal subunits, and thus maintains levels of free tRNAs and 50S ribosomes. This is Peptidyl-tRNA hydrolase from Anaplasma marginale (strain St. Maries).